Reading from the N-terminus, the 811-residue chain is MSFFKNQLIHRARPGYRIIPESTVTEDIELGTIGEETPLLSEGVITAVEEGAIGLPEVAIGVAGAIGTHAHEWWRDRYAFKSVLTGNYTDLKGNPLKPRNAIPEKIKQLGKKIFQGDFNRAFPDNLKLETEKEKADLLRYYNHNRRLAGLSEAYPQGKGYAYAKSQKVLEAERRGLTVPGYKYLGPGNSLNRGQPINQIDEDAKEHDEAYDKVKTSQEVSRADNTFVNKALDHVVNAINFKETPGNAFGAAIGAIGIGTKQAIEKYSGVIYPSVSGMSRHINPRYINQPNWKDYIAEGNSKNWVGYSNLPDDFFQEETLSDSPMQEATKRKADSPAVETPAKKGTTGVNVNSQSTDPQNPSSSGATTDLDVTMAMSLPGTGSGTSSGGGNTQGQDVYIIPRPFSNFGKKLSTYTKSHKFMIFGLANNVIGPTGTGTTAVNRLLTTCLAEIPWQKLPLYMNQSEFDLLPPGSRVVECNVKVIFRTNRIAFETSSTVTKQATLNQISNVQTAIGLNKLGWGINRAFTAFQSDQPMIPTATTAPKYEPVTGDTGYRGMIADYYGADSTNDTAFGNAGNYPHHQVSSFTFLQNYYCMYQQTNQGTGGWPCLAEHLQQFDSKTVNNQCLIDVTYKPKMGLIKSPLNYKIIGQPTVKGTISVGDNLVNMRGAVVTNPPEATQNVAESTHNLTRNFPADLFNIYSDIEKSQVLHKGPWGHENPQIQPSVHIGIQAVPALTTGALLINSSPLNSWTDSMGYIDVMSSCTVMEAQPTHFPFSTEANTNPGNTIYRINLTPNSLTSAFNGLYGNGATLGNV.

Positions 321–367 (DSPMQEATKRKADSPAVETPAKKGTTGVNVNSQSTDPQNPSSSGATT) are disordered. Polar residues predominate over residues 346 to 366 (TGVNVNSQSTDPQNPSSSGAT).

The protein resides in the virion. Functionally, capsid protein self-assembles to form an icosahedral capsid with a T=1 symmetry, about 22 nm in diameter, and consisting of 60 copies of size variants of the capsid proteins, which differ in the N-terminushe capsid encapsulates the genomic ssDNA. Capsid proteins are responsible for the attachment to host cell receptors. This attachment induces virion internalization predominantly through clathrin-dependent endocytosis. The sequence is that of Capsid protein VP1 (VP) from Galleria mellonella densovirus (GmDNV).